A 200-amino-acid polypeptide reads, in one-letter code: Shikimate kinase (200 aa).

33-38 (GAGKST) is an ATP binding site. Position 37 (serine 37) interacts with Mg(2+). Substrate-binding residues include aspartate 55, arginine 79, and glycine 101. Arginine 139 is a binding site for ATP. Arginine 158 contacts substrate.

This sequence belongs to the shikimate kinase family. As to quaternary structure, monomer. Requires Mg(2+) as cofactor.

It is found in the cytoplasm. The catalysed reaction is shikimate + ATP = 3-phosphoshikimate + ADP + H(+). The protein operates within metabolic intermediate biosynthesis; chorismate biosynthesis; chorismate from D-erythrose 4-phosphate and phosphoenolpyruvate: step 5/7. Catalyzes the specific phosphorylation of the 3-hydroxyl group of shikimic acid using ATP as a cosubstrate. The chain is Shikimate kinase from Brucella abortus (strain S19).